Here is a 519-residue protein sequence, read N- to C-terminus: Dolichol kinase (519 aa).

The Cytoplasmic portion of the chain corresponds to 1 to 47 (MVAIIPHASFTTIKLTQKTEGSQMPTEEICKINMRTRKFDVGGNSRD). Residues 48–68 (FECFYSNFVQTVILLGTFFYC) traverse the membrane as a helical segment. At 69-88 (VERLQPWSIVTADISYKQIF) the chain is on the lumenal side. Residues 89-109 (VNVFVVCLIMVGLIFTKYWQH) form a helical membrane-spanning segment. Topologically, residues 110-118 (GYKSLPKFD) are cytoplasmic. The chain crosses the membrane as a helical span at residues 119 to 139 (TIYSLYLPFMVSLLFDTSSTV). Topologically, residues 140–151 (INTILILSVLNS) are lumenal. The chain crosses the membrane as a helical span at residues 152-172 (YRWRTQLVVIILQLCLIFFNF). Residues 173–181 (EAGDRLKNI) are Cytoplasmic-facing. The helical transmembrane segment at 182 to 203 (ISIVINSLLSLILKYIGQLKSL) threads the bilayer. The Lumenal segment spans residues 204–223 (DNIDSNLFSILLTNILYVSE). Residues 224 to 244 (AGTVHFRILKGIILALTTIIS) form a helical membrane-spanning segment. At 245–253 (INYVLKKVM) the chain is on the cytoplasmic side. The helical transmembrane segment at 254–274 (HFKPFMLSISFAIGLPLFANT) threads the bilayer. The Lumenal segment spans residues 275-294 (FIHLEDGENPLLWLVKYILE). Residues 295–315 (STIRQKILFAWSSILILSIPS) traverse the membrane as a helical segment. Topologically, residues 316 to 326 (ILIEKDSLSLN) are cytoplasmic. Residues 327-347 (TSRKLWHFIIFLLIIPSFQMD) form a helical membrane-spanning segment. The Lumenal portion of the chain corresponds to 348-349 (SN). A helical transmembrane segment spans residues 350–370 (FVKIALSGTIPVFLSIEYIRF). Topologically, residues 371–394 (QNLPPLGSAIELQLRRFADDRDHS) are cytoplasmic. The chain crosses the membrane as a helical span at residues 395 to 415 (GPLIISYLYLLFGISTPLLMN). Over 416–417 (NS) the chain is Lumenal. A helical membrane pass occupies residues 418 to 438 (PMGLIGLGIGDSLASIIGKRY). Residues 439–449 (GRIRWKGTQKT) are Cytoplasmic-facing. Residues 450 to 470 (LEGTLAFIVTSFIVCLVLLRF) form a helical membrane-spanning segment. Residues 471-472 (DK) are Lumenal-facing. Residues 473–493 (AAIFNHLTTLQLLTLCTLSGV) traverse the membrane as a helical segment. Residues 494 to 519 (LEGNSVLNDNILIPAFMMICEKLITL) are Cytoplasmic-facing.

Belongs to the polyprenol kinase family.

It is found in the endoplasmic reticulum membrane. It catalyses the reaction a di-trans,poly-cis-dolichol + CTP = a di-trans,poly-cis-dolichyl phosphate + CDP + H(+). It participates in protein modification; protein glycosylation. Functionally, catalyzes CTP-mediated phosphorylation of dolichol, the terminal step in de novo dolichyl monophosphate (Dol-P) biosynthesis. Dol-P is a lipid carrier essential for the synthesis of N-linked and O-linked oligosaccharides and for GPI anchors. In Saccharomyces cerevisiae (strain ATCC 204508 / S288c) (Baker's yeast), this protein is Dolichol kinase (SEC59).